The following is an 882-amino-acid chain: Translation initiation factor IF-2 (882 aa).

A disordered region spans residues 38-294 (IEDSQASWVK…KSKHKRKKEN (257 aa)). Basic and acidic residues-rich tracts occupy residues 66-76 (TRDEAVKKHSG), 109-128 (GRRE…ERHS), and 207-219 (PDNK…DAKR). Basic residues predominate over residues 282 to 292 (PGRKSKHKRKK). Residues 383–556 (ARPPVVTIMG…EMNEIRANPD (174 aa)) form the tr-type G domain. Residues 392-399 (GHVDHGKT) form a G1 region. 392 to 399 (GHVDHGKT) serves as a coordination point for GTP. The segment at 417–421 (GITQH) is G2. Positions 438–441 (DTPG) are G3. GTP contacts are provided by residues 438–442 (DTPGH) and 492–495 (NKID). The interval 492-495 (NKID) is G4. Residues 528-530 (SAK) form a G5 region.

This sequence belongs to the TRAFAC class translation factor GTPase superfamily. Classic translation factor GTPase family. IF-2 subfamily.

The protein resides in the cytoplasm. Its function is as follows. One of the essential components for the initiation of protein synthesis. Protects formylmethionyl-tRNA from spontaneous hydrolysis and promotes its binding to the 30S ribosomal subunits. Also involved in the hydrolysis of GTP during the formation of the 70S ribosomal complex. The sequence is that of Translation initiation factor IF-2 from Syntrophomonas wolfei subsp. wolfei (strain DSM 2245B / Goettingen).